An 80-amino-acid polypeptide reads, in one-letter code: UPF0154 protein MGAS10270_Spy0296 (80 aa).

A helical transmembrane segment spans residues 4 to 24 (AIWILLLIVALGVGVFGGIFI).

The protein belongs to the UPF0154 family.

The protein localises to the cell membrane. This is UPF0154 protein MGAS10270_Spy0296 from Streptococcus pyogenes serotype M2 (strain MGAS10270).